Here is a 189-residue protein sequence, read N- to C-terminus: Elongation factor P (189 aa).

It belongs to the elongation factor P family.

It localises to the cytoplasm. The protein operates within protein biosynthesis; polypeptide chain elongation. Functionally, involved in peptide bond synthesis. Stimulates efficient translation and peptide-bond synthesis on native or reconstituted 70S ribosomes in vitro. Probably functions indirectly by altering the affinity of the ribosome for aminoacyl-tRNA, thus increasing their reactivity as acceptors for peptidyl transferase. The chain is Elongation factor P from Ehrlichia ruminantium (strain Gardel).